A 266-amino-acid chain; its full sequence is GTP cyclohydrolase FolE2 (266 aa).

The protein belongs to the GTP cyclohydrolase IV family.

The enzyme catalyses GTP + H2O = 7,8-dihydroneopterin 3'-triphosphate + formate + H(+). It functions in the pathway cofactor biosynthesis; 7,8-dihydroneopterin triphosphate biosynthesis; 7,8-dihydroneopterin triphosphate from GTP: step 1/1. Its function is as follows. Converts GTP to 7,8-dihydroneopterin triphosphate. In Syntrophotalea carbinolica (strain DSM 2380 / NBRC 103641 / GraBd1) (Pelobacter carbinolicus), this protein is GTP cyclohydrolase FolE2.